The chain runs to 266 residues: 2-C-methyl-D-erythritol 4-phosphate cytidylyltransferase (266 aa).

Residues 229-266 (NRDCGPGTRDPESAHPQSSVSASAFSGPGSRAPGPEEI) are disordered. A compositionally biased stretch (polar residues) spans 243–252 (HPQSSVSASA).

Belongs to the IspD/TarI cytidylyltransferase family. IspD subfamily.

The enzyme catalyses 2-C-methyl-D-erythritol 4-phosphate + CTP + H(+) = 4-CDP-2-C-methyl-D-erythritol + diphosphate. The protein operates within isoprenoid biosynthesis; isopentenyl diphosphate biosynthesis via DXP pathway; isopentenyl diphosphate from 1-deoxy-D-xylulose 5-phosphate: step 2/6. Catalyzes the formation of 4-diphosphocytidyl-2-C-methyl-D-erythritol from CTP and 2-C-methyl-D-erythritol 4-phosphate (MEP). The chain is 2-C-methyl-D-erythritol 4-phosphate cytidylyltransferase from Xanthomonas axonopodis pv. citri (strain 306).